A 560-amino-acid polypeptide reads, in one-letter code: RNA polymerase-associated protein C651.09c (560 aa).

Disordered stretches follow at residues Asp-15–Tyr-74 and Tyr-128–Gln-207. Basic and acidic residues predominate over residues Gly-148 to Arg-171. The span at Asp-180–Gly-195 shows a compositional bias: acidic residues. At Ser-197 the chain carries Phosphoserine. One can recognise a Plus3 domain in the interval Ser-214–Lys-345. Residues Ala-387 to Ala-456 adopt a coiled-coil conformation. The segment covering Glu-440–Arg-449 has biased composition (basic and acidic residues). The disordered stretch occupies residues Glu-440–Lys-486. Residues Ser-451–Ser-480 are compositionally biased toward low complexity. Ser-502 and Ser-506 each carry phosphoserine.

As to quaternary structure, component of the PAF1 complex.

The protein resides in the nucleus. The protein localises to the nucleoplasm. In terms of biological role, the PAF1 complex is a multifunctional complex. Involved in transcription initiation via genetic interactions with TATA-binding proteins. Involved in elongation. Also has a role in transcription-coupled histone modification. Important for TATA site selection by TBP. Directly or indirectly regulates the DNA-binding properties of the TATA box-binding protein, and the relative activities of different TATA elements. The sequence is that of RNA polymerase-associated protein C651.09c from Schizosaccharomyces pombe (strain 972 / ATCC 24843) (Fission yeast).